A 346-amino-acid polypeptide reads, in one-letter code: UDP-3-O-acylglucosamine N-acyltransferase (346 aa).

His-253 (proton acceptor) is an active-site residue.

Belongs to the transferase hexapeptide repeat family. LpxD subfamily. In terms of assembly, homotrimer.

The catalysed reaction is a UDP-3-O-[(3R)-3-hydroxyacyl]-alpha-D-glucosamine + a (3R)-hydroxyacyl-[ACP] = a UDP-2-N,3-O-bis[(3R)-3-hydroxyacyl]-alpha-D-glucosamine + holo-[ACP] + H(+). It participates in bacterial outer membrane biogenesis; LPS lipid A biosynthesis. Functionally, catalyzes the N-acylation of UDP-3-O-acylglucosamine using 3-hydroxyacyl-ACP as the acyl donor. Is involved in the biosynthesis of lipid A, a phosphorylated glycolipid that anchors the lipopolysaccharide to the outer membrane of the cell. The polypeptide is UDP-3-O-acylglucosamine N-acyltransferase (Rickettsia felis (strain ATCC VR-1525 / URRWXCal2) (Rickettsia azadi)).